The primary structure comprises 362 residues: Protein U8 (362 aa).

This sequence belongs to the herpesviridae US22 family.

The protein is Protein U8 (U8) of Human herpesvirus 7 (strain JI) (HHV-7).